Consider the following 320-residue polypeptide: Malate dehydrogenase (320 aa).

NAD(+) is bound by residues 10-15 (GAGMIG) and D34. Substrate is bound by residues R83 and R89. NAD(+) is bound by residues N96 and 119 to 121 (ITN). Residues N121 and R152 each coordinate substrate. The active-site Proton acceptor is H176.

Belongs to the LDH/MDH superfamily. MDH type 3 family.

It carries out the reaction (S)-malate + NAD(+) = oxaloacetate + NADH + H(+). Catalyzes the reversible oxidation of malate to oxaloacetate. The sequence is that of Malate dehydrogenase from Caulobacter vibrioides (strain NA1000 / CB15N) (Caulobacter crescentus).